The primary structure comprises 100 residues: Small ribosomal subunit protein uS14c (100 aa).

Belongs to the universal ribosomal protein uS14 family. Part of the 30S ribosomal subunit.

The protein localises to the plastid. It is found in the chloroplast. Functionally, binds 16S rRNA, required for the assembly of 30S particles. In Lactuca sativa (Garden lettuce), this protein is Small ribosomal subunit protein uS14c.